The following is a 118-amino-acid chain: MARVKRGVTSHAKHKKVLKAVKGQWGRRKSTIRVAKQAMEKAMQYAYRDRRTKKREFKSLWIQRINAGVRSEGITYSKFINGLTKCGIKLDRKILAEIAYDSPEAFKTIVQKAQSALN.

The protein belongs to the bacterial ribosomal protein bL20 family.

Binds directly to 23S ribosomal RNA and is necessary for the in vitro assembly process of the 50S ribosomal subunit. It is not involved in the protein synthesizing functions of that subunit. The polypeptide is Large ribosomal subunit protein bL20 (Pelagibacter ubique (strain HTCC1062)).